The following is a 147-amino-acid chain: Large ribosomal subunit protein uL22 (147 aa).

The tract at residues 110–147 is disordered; it reads EEKKTVAKKAPAAKKTTTTKAPAKKTTSTKKATAKKES. The span at 117–140 shows a compositional bias: low complexity; sequence KKAPAAKKTTTTKAPAKKTTSTKK.

It belongs to the universal ribosomal protein uL22 family. As to quaternary structure, part of the 50S ribosomal subunit.

In terms of biological role, this protein binds specifically to 23S rRNA; its binding is stimulated by other ribosomal proteins, e.g. L4, L17, and L20. It is important during the early stages of 50S assembly. It makes multiple contacts with different domains of the 23S rRNA in the assembled 50S subunit and ribosome. Functionally, the globular domain of the protein is located near the polypeptide exit tunnel on the outside of the subunit, while an extended beta-hairpin is found that lines the wall of the exit tunnel in the center of the 70S ribosome. The protein is Large ribosomal subunit protein uL22 of Campylobacter jejuni subsp. jejuni serotype O:23/36 (strain 81-176).